A 77-amino-acid polypeptide reads, in one-letter code: Dermatoxin-S1 (77 aa).

Positions 1 to 22 are cleaved as a signal peptide; sequence MAFLKKSLFLILFLGLVPLSFC. Positions 23–44 are excised as a propeptide; that stretch reads ENDKREGENEEEQDDDQSEEKR. Glutamine 76 is modified (glutamine amide).

Expressed by the skin glands.

The protein localises to the secreted. It is found in the target cell membrane. Antimicrobial peptide with potent activity against Gram-positive bacteria B.megaterium, C.glutamicum and S.aureus and mollicutes A.laidlawii and S.melliferum. Less active against Gram-negative bacteria B.cepacia, P.aeruginosa, S.typhimurium and S.meliloti. Probably acts by disturbing membrane functions with its amphipathic structure. This Phyllomedusa sauvagei (Sauvage's leaf frog) protein is Dermatoxin-S1.